The chain runs to 614 residues: UvrABC system protein C (614 aa).

In terms of domain architecture, GIY-YIG spans 26 to 104; sequence NLPGVYKMLG…IKEHRPPYNV (79 aa). The region spanning 215–250 is the UVR domain; that stretch reads SDIHTTLIEKMEHSAEALDFEKAAFYRDQLSMLREV.

It belongs to the UvrC family. As to quaternary structure, interacts with UvrB in an incision complex.

The protein resides in the cytoplasm. Functionally, the UvrABC repair system catalyzes the recognition and processing of DNA lesions. UvrC both incises the 5' and 3' sides of the lesion. The N-terminal half is responsible for the 3' incision and the C-terminal half is responsible for the 5' incision. The sequence is that of UvrABC system protein C from Psychrobacter sp. (strain PRwf-1).